The following is a 275-amino-acid chain: Formamidopyrimidine-DNA glycosylase (275 aa).

The active-site Schiff-base intermediate with DNA is Pro-2. The active-site Proton donor is the Glu-3. The active-site Proton donor; for beta-elimination activity is Lys-58. Residues His-93, Arg-111, and Arg-156 each contribute to the DNA site. The FPG-type zinc finger occupies 241–275 (FVYDRAGLPCRVCGTPIRQIVQGQRSTYFCPTCQR). Arg-265 functions as the Proton donor; for delta-elimination activity in the catalytic mechanism.

The protein belongs to the FPG family. In terms of assembly, monomer. Zn(2+) is required as a cofactor.

It carries out the reaction Hydrolysis of DNA containing ring-opened 7-methylguanine residues, releasing 2,6-diamino-4-hydroxy-5-(N-methyl)formamidopyrimidine.. The enzyme catalyses 2'-deoxyribonucleotide-(2'-deoxyribose 5'-phosphate)-2'-deoxyribonucleotide-DNA = a 3'-end 2'-deoxyribonucleotide-(2,3-dehydro-2,3-deoxyribose 5'-phosphate)-DNA + a 5'-end 5'-phospho-2'-deoxyribonucleoside-DNA + H(+). Its function is as follows. Involved in base excision repair of DNA damaged by oxidation or by mutagenic agents. Acts as a DNA glycosylase that recognizes and removes damaged bases. Has a preference for oxidized purines, such as 7,8-dihydro-8-oxoguanine (8-oxoG). Has AP (apurinic/apyrimidinic) lyase activity and introduces nicks in the DNA strand. Cleaves the DNA backbone by beta-delta elimination to generate a single-strand break at the site of the removed base with both 3'- and 5'-phosphates. The polypeptide is Formamidopyrimidine-DNA glycosylase (Burkholderia ambifaria (strain MC40-6)).